Consider the following 193-residue polypeptide: UPF0301 protein Fphi_1754 (193 aa).

It belongs to the UPF0301 (AlgH) family.

In Francisella philomiragia subsp. philomiragia (strain ATCC 25017 / CCUG 19701 / FSC 153 / O#319-036), this protein is UPF0301 protein Fphi_1754.